Reading from the N-terminus, the 418-residue chain is Aminodeoxyfutalosine deaminase (418 aa).

The Zn(2+) site is built by histidine 97 and histidine 99. 2 residues coordinate substrate: glutamate 173 and histidine 211. Histidine 238 is a binding site for Zn(2+). Glutamate 241 functions as the Proton donor in the catalytic mechanism. Residue aspartate 352 participates in Zn(2+) binding.

The protein belongs to the metallo-dependent hydrolases superfamily. Requires Zn(2+) as cofactor.

The enzyme catalyses 6-amino-6-deoxyfutalosine + H2O + H(+) = futalosine + NH4(+). It functions in the pathway quinol/quinone metabolism; menaquinone biosynthesis. Its function is as follows. Catalyzes the deamination of aminodeoxyfutalosine (AFL) into futalosine (FL). To a lesser extent, can also deaminate 5'-deoxyadenosine, 5'-methylthioadenosine, 2'-deoxyadenosine, adenosine, 1-(6-amino-9H-purin-9-yl)-1-deoxy-N-ethyl-beta-D-ribofuranuronamide (NECA), and S-adenosylhomocysteine. This chain is Aminodeoxyfutalosine deaminase, found in Deinococcus radiodurans (strain ATCC 13939 / DSM 20539 / JCM 16871 / CCUG 27074 / LMG 4051 / NBRC 15346 / NCIMB 9279 / VKM B-1422 / R1).